The chain runs to 181 residues: Large ribosomal subunit protein uL10 (181 aa).

The protein belongs to the universal ribosomal protein uL10 family. Part of the ribosomal stalk of the 50S ribosomal subunit. The N-terminus interacts with L11 and the large rRNA to form the base of the stalk. The C-terminus forms an elongated spine to which L12 dimers bind in a sequential fashion forming a multimeric L10(L12)X complex.

Forms part of the ribosomal stalk, playing a central role in the interaction of the ribosome with GTP-bound translation factors. The polypeptide is Large ribosomal subunit protein uL10 (Fervidobacterium nodosum (strain ATCC 35602 / DSM 5306 / Rt17-B1)).